Reading from the N-terminus, the 338-residue chain is DNA-directed RNA polymerase subunit alpha (338 aa).

The tract at residues 1 to 226 (MLIAQRPSLT…ELFGLARELN (226 aa)) is alpha N-terminal domain (alpha-NTD). Residues 243–338 (LAADLVMPIE…DAGFLETEHY (96 aa)) are alpha C-terminal domain (alpha-CTD).

This sequence belongs to the RNA polymerase alpha chain family. In terms of assembly, homodimer. The RNAP catalytic core consists of 2 alpha, 1 beta, 1 beta' and 1 omega subunit. When a sigma factor is associated with the core the holoenzyme is formed, which can initiate transcription.

It carries out the reaction RNA(n) + a ribonucleoside 5'-triphosphate = RNA(n+1) + diphosphate. In terms of biological role, DNA-dependent RNA polymerase catalyzes the transcription of DNA into RNA using the four ribonucleoside triphosphates as substrates. This is DNA-directed RNA polymerase subunit alpha from Streptomyces avermitilis (strain ATCC 31267 / DSM 46492 / JCM 5070 / NBRC 14893 / NCIMB 12804 / NRRL 8165 / MA-4680).